The chain runs to 302 residues: Tyrosine--tRNA ligase 2 (302 aa).

Tyrosine 33 lines the L-tyrosine pocket. The 'HIGH' region motif lies at 38 to 47 (PTADSLHLGH). The L-tyrosine site is built by tyrosine 160 and glutamine 164. Positions 220–224 (KFGKS) match the 'KMSKS' region motif. Lysine 223 contacts ATP.

It belongs to the class-I aminoacyl-tRNA synthetase family. TyrS type 1 subfamily. In terms of assembly, homodimer.

It is found in the cytoplasm. The enzyme catalyses tRNA(Tyr) + L-tyrosine + ATP = L-tyrosyl-tRNA(Tyr) + AMP + diphosphate + H(+). Functionally, catalyzes the attachment of tyrosine to tRNA(Tyr) in a two-step reaction: tyrosine is first activated by ATP to form Tyr-AMP and then transferred to the acceptor end of tRNA(Tyr). In Streptococcus thermophilus (strain CNRZ 1066), this protein is Tyrosine--tRNA ligase 2 (tyrS2).